Here is a 381-residue protein sequence, read N- to C-terminus: p55-v-Fos-transforming protein (381 aa).

One can recognise a bZIP domain in the interval E137–H200. Residues K139 to R159 form a basic motif region. A leucine-zipper region spans residues L165–L193.

It belongs to the bZIP family. Fos subfamily.

Its subcellular location is the host nucleus. The sequence is that of p55-v-Fos-transforming protein (V-FOS) from Mus musculus (Mouse).